A 432-amino-acid chain; its full sequence is D-amino acid dehydrogenase (432 aa).

3-17 (VVILGSGVVGVTSAW) provides a ligand contact to FAD.

The protein belongs to the DadA oxidoreductase family. FAD serves as cofactor.

It catalyses the reaction a D-alpha-amino acid + A + H2O = a 2-oxocarboxylate + AH2 + NH4(+). It participates in amino-acid degradation; D-alanine degradation; NH(3) and pyruvate from D-alanine: step 1/1. Oxidative deamination of D-amino acids. In Salmonella choleraesuis (strain SC-B67), this protein is D-amino acid dehydrogenase.